Here is a 229-residue protein sequence, read N- to C-terminus: UPF0758 protein CLH_0547 (229 aa).

Residues 107–229 form the MPN domain; the sequence is KIMSPNDIAM…FISLKEKGFI (123 aa). Residues His-178, His-180, and Asp-191 each coordinate Zn(2+). The JAMM motif signature appears at 178–191; sequence HNHPSGDPTPSKED.

Belongs to the UPF0758 family.

This is UPF0758 protein CLH_0547 from Clostridium botulinum (strain Alaska E43 / Type E3).